The chain runs to 290 residues: Probable branched-chain-amino-acid aminotransferase (290 aa).

Lys-155 bears the N6-(pyridoxal phosphate)lysine mark.

The protein belongs to the class-IV pyridoxal-phosphate-dependent aminotransferase family. Pyridoxal 5'-phosphate is required as a cofactor.

The catalysed reaction is L-leucine + 2-oxoglutarate = 4-methyl-2-oxopentanoate + L-glutamate. It carries out the reaction L-isoleucine + 2-oxoglutarate = (S)-3-methyl-2-oxopentanoate + L-glutamate. The enzyme catalyses L-valine + 2-oxoglutarate = 3-methyl-2-oxobutanoate + L-glutamate. The protein operates within amino-acid biosynthesis; L-isoleucine biosynthesis; L-isoleucine from 2-oxobutanoate: step 4/4. Its pathway is amino-acid biosynthesis; L-leucine biosynthesis; L-leucine from 3-methyl-2-oxobutanoate: step 4/4. It functions in the pathway amino-acid biosynthesis; L-valine biosynthesis; L-valine from pyruvate: step 4/4. In terms of biological role, acts on leucine, isoleucine and valine. This chain is Probable branched-chain-amino-acid aminotransferase (ilvE), found in Rickettsia felis (strain ATCC VR-1525 / URRWXCal2) (Rickettsia azadi).